Reading from the N-terminus, the 633-residue chain is Micronuclear linker histone polyprotein (633 aa).

DNA-binding regions (HMG box) lie at residues 12-74 and 96-164; these read PPKK…LFHY and PKKP…KKWN. The segment at 170–633 is disordered; that stretch reads AAQKKQTKRK…AYGKKANKKQ (464 aa). Over residues 174-190 the composition is skewed to basic residues; that stretch reads KQTKRKNSTSKSRRSSS. Low complexity-rich tracts occupy residues 212 to 224 and 253 to 271; these read SSAS…SSSS and NSTS…SSSS. Composition is skewed to basic residues over residues 272–309 and 330–352; these read KNKK…RKSS and SNKR…RKSS. Composition is skewed to basic and acidic residues over residues 353-374 and 382-401; these read KSQE…EGQK and AKRD…EART. The span at 406 to 416 shows a compositional bias: low complexity; that stretch reads NKSASKASKSG. Residues 417–444 show a composition bias toward basic residues; the sequence is SKSKGKSASKSKGKSSSKGKNSKSRSAS. Over residues 446–469 the composition is skewed to polar residues; the sequence is PKSNAAQNSNNTHQTADSSENASS. The segment covering 478 to 491 has biased composition (basic and acidic residues); that stretch reads RQREQKDMVNEKSN. Over residues 496-524 the composition is skewed to basic residues; the sequence is SKGKKNSKSNTRSKSKSKSASKSRKNASK. Basic and acidic residues-rich tracts occupy residues 540–550 and 559–612; these read SRSESKSKSEA and EVIE…EDSK.

Post-translationally, all four histones are processed from the precursor molecule. In terms of processing, phosphorylated in growing and dividing cells but not in nongrowing (starved) cells. The N-terminus of MIC LH-alpha and MIC LH-delta is blocked.

The protein localises to the nucleus. It localises to the chromosome. This Tetrahymena thermophila (strain SB210) protein is Micronuclear linker histone polyprotein (MLH).